The chain runs to 391 residues: Ferrochelatase (391 aa).

Residues histidine 196 and glutamate 281 each coordinate Fe cation.

This sequence belongs to the ferrochelatase family.

Its subcellular location is the cytoplasm. The enzyme catalyses heme b + 2 H(+) = protoporphyrin IX + Fe(2+). The protein operates within porphyrin-containing compound metabolism; protoheme biosynthesis; protoheme from protoporphyrin-IX: step 1/1. Its function is as follows. Catalyzes the ferrous insertion into protoporphyrin IX. This is Ferrochelatase from Prochlorococcus marinus (strain MIT 9211).